A 509-amino-acid polypeptide reads, in one-letter code: MEELQGYLKIDRSRERDFLYPLLFQEYIYALAHDHGLNKSILYEPMENLGYDKKYSLIIVKRLITRMYQQKHLIIFTNDSNPNFFFGHNKNLDSQMISEGVAVIVELPFSLRLVSSPESKEIDKSMTTLRSIHSIFPFLEDKLLHLNHVLDILIPYPIHLELLVQTLRSWIQDAPFLHLLRFFLYKYHNWNSLITQKTKMILFFSKENQRFFLFLYNFHVYESESIFVFLRKQSYHLRSTSSRAFLDRTHFYRKIEHFFVDFRNDFHTILWLFKDPFIQYFRFQGKSILSSKGTPLLMKKWKYYLVNLWECHFYFWSQPDRIHINQLSNHFIDFLGYLSSVRPTPSAVRSQMLEKSFIIDIVIKKFDTIVPIIPLIGSLAKAKFCNFSGHPISKPAWADSSDSDIIDRFGRICRNLSHYYSGSSKKKSLYRIKYILRLSCARTLARKHKSTVRSFLKRLGSEFLEEFLMEEEQVLSFILPRISYFSKRLYKERIWYFDIIRINDLTNLS.

It belongs to the intron maturase 2 family. MatK subfamily.

It localises to the plastid. The protein resides in the chloroplast. Functionally, usually encoded in the trnK tRNA gene intron. Probably assists in splicing its own and other chloroplast group II introns. This is Maturase K from Clematis florida (Asian virgin's bower).